The sequence spans 642 residues: Chaperone protein DnaK (642 aa).

T200 carries the phosphothreonine; by autocatalysis modification. Residues A603–K623 are compositionally biased toward low complexity. The disordered stretch occupies residues A603–D627.

The protein belongs to the heat shock protein 70 family.

Its function is as follows. Acts as a chaperone. This Xanthomonas campestris pv. campestris (strain B100) protein is Chaperone protein DnaK.